We begin with the raw amino-acid sequence, 125 residues long: Large ribosomal subunit protein bL20 (125 aa).

This sequence belongs to the bacterial ribosomal protein bL20 family.

Functionally, binds directly to 23S ribosomal RNA and is necessary for the in vitro assembly process of the 50S ribosomal subunit. It is not involved in the protein synthesizing functions of that subunit. In Rhizorhabdus wittichii (strain DSM 6014 / CCUG 31198 / JCM 15750 / NBRC 105917 / EY 4224 / RW1) (Sphingomonas wittichii), this protein is Large ribosomal subunit protein bL20.